Here is a 286-residue protein sequence, read N- to C-terminus: DNA-directed RNA polymerase subunit Rpo3 (286 aa).

This sequence belongs to the archaeal Rpo3/eukaryotic RPB3 RNA polymerase subunit family. As to quaternary structure, part of the RNA polymerase complex.

It localises to the cytoplasm. It carries out the reaction RNA(n) + a ribonucleoside 5'-triphosphate = RNA(n+1) + diphosphate. Its function is as follows. DNA-dependent RNA polymerase (RNAP) catalyzes the transcription of DNA into RNA using the four ribonucleoside triphosphates as substrates. This chain is DNA-directed RNA polymerase subunit Rpo3, found in Aeropyrum pernix (strain ATCC 700893 / DSM 11879 / JCM 9820 / NBRC 100138 / K1).